The chain runs to 541 residues: Glutamyl-tRNA(Gln) amidotransferase subunit B, mitochondrial (541 aa).

Belongs to the GatB/GatE family. GatB subfamily. In terms of assembly, subunit of the heterotrimeric GatFAB amidotransferase (AdT) complex, composed of A, B and F subunits.

The protein resides in the mitochondrion. The enzyme catalyses L-glutamyl-tRNA(Gln) + L-glutamine + ATP + H2O = L-glutaminyl-tRNA(Gln) + L-glutamate + ADP + phosphate + H(+). Allows the formation of correctly charged Gln-tRNA(Gln) through the transamidation of misacylated Glu-tRNA(Gln) in the mitochondria. The reaction takes place in the presence of glutamine and ATP through an activated gamma-phospho-Glu-tRNA(Gln). This Saccharomyces cerevisiae (strain RM11-1a) (Baker's yeast) protein is Glutamyl-tRNA(Gln) amidotransferase subunit B, mitochondrial.